The primary structure comprises 503 residues: Maturase K (503 aa).

The protein belongs to the intron maturase 2 family. MatK subfamily.

The protein localises to the plastid. It localises to the chloroplast. Functionally, usually encoded in the trnK tRNA gene intron. Probably assists in splicing its own and other chloroplast group II introns. The chain is Maturase K from Rosa canina (Dog rose).